Here is a 305-residue protein sequence, read N- to C-terminus: Probable GTP 3',8-cyclase (305 aa).

The 223-residue stretch at 6-228 folds into the Radical SAM core domain; the sequence is NHRRPLVSLR…MTRKFMQDRK (223 aa). Arginine 15 lines the GTP pocket. 2 residues coordinate [4Fe-4S] cluster: cysteine 22 and cysteine 26. Tyrosine 28 contacts S-adenosyl-L-methionine. A [4Fe-4S] cluster-binding site is contributed by cysteine 29. Arginine 62 is a binding site for GTP. Residue glycine 66 coordinates S-adenosyl-L-methionine. Threonine 92 lines the GTP pocket. Serine 116 lines the S-adenosyl-L-methionine pocket. Position 153 (lysine 153) interacts with GTP. The [4Fe-4S] cluster site is built by cysteine 249 and cysteine 252. 254 to 256 is a binding site for GTP; sequence RLR. Position 266 (cysteine 266) interacts with [4Fe-4S] cluster.

Belongs to the radical SAM superfamily. MoaA family. [4Fe-4S] cluster serves as cofactor.

It carries out the reaction GTP + AH2 + S-adenosyl-L-methionine = (8S)-3',8-cyclo-7,8-dihydroguanosine 5'-triphosphate + 5'-deoxyadenosine + L-methionine + A + H(+). The protein operates within cofactor biosynthesis; molybdopterin biosynthesis. Its function is as follows. Catalyzes the cyclization of GTP to (8S)-3',8-cyclo-7,8-dihydroguanosine 5'-triphosphate. The protein is Probable GTP 3',8-cyclase of Methanothermobacter marburgensis (strain ATCC BAA-927 / DSM 2133 / JCM 14651 / NBRC 100331 / OCM 82 / Marburg) (Methanobacterium thermoautotrophicum).